A 96-amino-acid chain; its full sequence is MNIRPLHDRVIIKREEVETRSAGGIVLTGSAATKSTRAKVLAVGKGRILENGTVQPLDVKVGDTVIFNDGYGVKNEKIDGEEVLIISENDILAIVE.

It belongs to the GroES chaperonin family. Heptamer of 7 subunits arranged in a ring. Interacts with the chaperonin GroEL.

The protein localises to the cytoplasm. Functionally, together with the chaperonin GroEL, plays an essential role in assisting protein folding. The GroEL-GroES system forms a nano-cage that allows encapsulation of the non-native substrate proteins and provides a physical environment optimized to promote and accelerate protein folding. GroES binds to the apical surface of the GroEL ring, thereby capping the opening of the GroEL channel. This chain is Co-chaperonin GroES, found in Haemophilus influenzae (strain PittGG).